The following is a 154-amino-acid chain: Iron-sulfur cluster assembly 2 homolog, mitochondrial (154 aa).

Residues 1 to 8 (MAASRALS) constitute a mitochondrion transit peptide. Positions 79, 144, and 146 each coordinate Fe cation.

This sequence belongs to the HesB/IscA family. In terms of assembly, heterotetramer; forms a dimer of dimers with IBA57. Interacts with [2Fe-2S]-ISCA2 forming the heterodimer [2Fe- 2S]-ISCA2-IBA57 complex; [2Fe-2S] cluster binding is absolutely required to promote the complex formation.

The protein resides in the mitochondrion. Involved in the maturation of mitochondrial 4Fe-4S proteins functioning late in the iron-sulfur cluster assembly pathway. May be involved in the binding of an intermediate of Fe/S cluster assembly. This Mus musculus (Mouse) protein is Iron-sulfur cluster assembly 2 homolog, mitochondrial (Isca2).